The primary structure comprises 93 residues: Phosphoribosyl-ATP pyrophosphatase (93 aa).

This sequence belongs to the PRA-PH family.

The protein localises to the cytoplasm. The enzyme catalyses 1-(5-phospho-beta-D-ribosyl)-ATP + H2O = 1-(5-phospho-beta-D-ribosyl)-5'-AMP + diphosphate + H(+). It participates in amino-acid biosynthesis; L-histidine biosynthesis; L-histidine from 5-phospho-alpha-D-ribose 1-diphosphate: step 2/9. In Mycolicibacterium paratuberculosis (strain ATCC BAA-968 / K-10) (Mycobacterium paratuberculosis), this protein is Phosphoribosyl-ATP pyrophosphatase.